Consider the following 567-residue polypeptide: MIKADLKIINGQIYNTFTRQFTAKEVAIVDGKFFQIADKLSDDFKFEDILDLKGSYVIPGLIDSHMHIESSMATPTNFSETAIRFGTTTVIADAHEIANTSGIKGLKRFMDQPSLIDTFFAIPSSVPSTNPELETTGGIIDLEEVKELLADPRIICLGEAMNFKGITSEPNSLIRKIIALCQKKRPRMPLEGHVPNISKEDLAKFIFAGILSDHTQQTPALIKEKIENGMFIQLQKKSLNKENIETIVKNHFYDYSALVTDDTMADDLINGHLNSIIKLAVKCGLPLEWAIYMTTYTPAQHMHFQDRGVIAPGKIADFVVLNNLDGFSIKNVYKRGVPIDKLSIDDEKPFASEEYHSIYVPNRSAKDFTLRVSKDLKKITANVIEIAAKGTFTKAVKKELLVKDGIVDWQKAGLALLAVQERYGKTGQLTLALVSKSINKSGAIATTWAHDHHNLMVLGTNPDSMAIAYDKVASQQGGYLVVKDKEIVANVQLPIAGIISDEPIDIIGHKLKKVRLAMKDLGYVNTNEIMSLSTLSLLVSPSIKVSDKGIFDVKTQTKIPLLLAGEE.

Belongs to the metallo-dependent hydrolases superfamily. Adenine deaminase family. Mn(2+) is required as a cofactor.

It catalyses the reaction adenine + H2O + H(+) = hypoxanthine + NH4(+). The sequence is that of Adenine deaminase 2 from Oenococcus oeni (strain ATCC BAA-331 / PSU-1).